A 544-amino-acid chain; its full sequence is Chaperonin GroEL (544 aa).

ATP-binding positions include 30–33, lysine 51, 87–91, glycine 415, and aspartate 495; these read TLGP and DGTTT.

This sequence belongs to the chaperonin (HSP60) family. As to quaternary structure, forms a cylinder of 14 subunits composed of two heptameric rings stacked back-to-back. Interacts with the co-chaperonin GroES.

The protein resides in the cytoplasm. It catalyses the reaction ATP + H2O + a folded polypeptide = ADP + phosphate + an unfolded polypeptide.. Together with its co-chaperonin GroES, plays an essential role in assisting protein folding. The GroEL-GroES system forms a nano-cage that allows encapsulation of the non-native substrate proteins and provides a physical environment optimized to promote and accelerate protein folding. In Neisseria meningitidis serogroup A / serotype 4A (strain DSM 15465 / Z2491), this protein is Chaperonin GroEL.